The following is a 235-amino-acid chain: Purine nucleoside phosphorylase DeoD-type (235 aa).

H4 is an a purine D-ribonucleoside binding site. Phosphate is bound by residues G20, R24, R43, and 87-90; that span reads RVGT. A purine D-ribonucleoside-binding positions include E162, 179–181, and 203–204; these read EME and SD. D204 acts as the Proton donor in catalysis.

It belongs to the PNP/UDP phosphorylase family. Homohexamer; trimer of homodimers.

It catalyses the reaction a purine D-ribonucleoside + phosphate = a purine nucleobase + alpha-D-ribose 1-phosphate. It carries out the reaction a purine 2'-deoxy-D-ribonucleoside + phosphate = a purine nucleobase + 2-deoxy-alpha-D-ribose 1-phosphate. In terms of biological role, catalyzes the reversible phosphorolytic breakdown of the N-glycosidic bond in the beta-(deoxy)ribonucleoside molecules, with the formation of the corresponding free purine bases and pentose-1-phosphate. The chain is Purine nucleoside phosphorylase DeoD-type from Bacillus cereus (strain B4264).